A 173-amino-acid polypeptide reads, in one-letter code: dCTP deaminase (173 aa).

DCTP-binding positions include 97–102 (RSSFAR) and Asp-113. Residue Glu-123 is the Proton donor/acceptor of the active site. DCTP-binding residues include Tyr-155 and Gln-162.

Belongs to the dCTP deaminase family. As to quaternary structure, homotrimer.

It catalyses the reaction dCTP + H2O + H(+) = dUTP + NH4(+). It functions in the pathway pyrimidine metabolism; dUMP biosynthesis; dUMP from dCTP (dUTP route): step 1/2. In terms of biological role, catalyzes the deamination of dCTP to dUTP. The polypeptide is dCTP deaminase (Acidianus ambivalens (Desulfurolobus ambivalens)).